A 159-amino-acid chain; its full sequence is Ribosome maturation factor RimP (159 aa).

The protein belongs to the RimP family.

The protein localises to the cytoplasm. Required for maturation of 30S ribosomal subunits. The sequence is that of Ribosome maturation factor RimP from Geobacter sulfurreducens (strain ATCC 51573 / DSM 12127 / PCA).